Consider the following 282-residue polypeptide: Undecaprenyl-diphosphatase (282 aa).

A run of 8 helical transmembrane segments spans residues valine 7–isoleucine 29, phenylalanine 45–tryptophan 65, glycine 89–lysine 109, leucine 115–isoleucine 135, leucine 153–leucine 173, phenylalanine 196–leucine 216, threonine 229–methionine 249, and tryptophan 258–isoleucine 278.

Belongs to the UppP family.

The protein resides in the cell inner membrane. It catalyses the reaction di-trans,octa-cis-undecaprenyl diphosphate + H2O = di-trans,octa-cis-undecaprenyl phosphate + phosphate + H(+). Catalyzes the dephosphorylation of undecaprenyl diphosphate (UPP). Confers resistance to bacitracin. This is Undecaprenyl-diphosphatase from Acidiphilium cryptum (strain JF-5).